Reading from the N-terminus, the 173-residue chain is Translocon-associated protein subunit delta (173 aa).

The signal sequence occupies residues 1–23 (MAAMASLGALALLLLSSLSRCSA). Over 24 to 144 (EACLEPQITP…SVDHRGTWNG (121 aa)) the chain is Lumenal. Residues C26 and C57 are joined by a disulfide bond. K73 is covalently cross-linked (Glycyl lysine isopeptide (Lys-Gly) (interchain with G-Cter in ubiquitin)). A helical membrane pass occupies residues 145 to 165 (PWVSTEVLAAAIGLVIYYLAF). The Cytoplasmic portion of the chain corresponds to 166-173 (SAKSHIQA).

The protein belongs to the TRAP-delta family. As to quaternary structure, heterotetramer of TRAP-alpha, TRAP-beta, TRAP-delta and TRAP-gamma.

It localises to the endoplasmic reticulum membrane. TRAP proteins are part of a complex whose function is to bind calcium to the ER membrane and thereby regulate the retention of ER resident proteins. The chain is Translocon-associated protein subunit delta (SSR4) from Homo sapiens (Human).